A 348-amino-acid chain; its full sequence is Uroporphyrinogen decarboxylase (348 aa).

Substrate-binding positions include 27–31 (RQAGR), Phe46, Asp76, Tyr152, Ser207, and His320.

It belongs to the uroporphyrinogen decarboxylase family. In terms of assembly, homodimer.

It localises to the cytoplasm. It carries out the reaction uroporphyrinogen III + 4 H(+) = coproporphyrinogen III + 4 CO2. Its pathway is porphyrin-containing compound metabolism; protoporphyrin-IX biosynthesis; coproporphyrinogen-III from 5-aminolevulinate: step 4/4. Its function is as follows. Catalyzes the decarboxylation of four acetate groups of uroporphyrinogen-III to yield coproporphyrinogen-III. The chain is Uroporphyrinogen decarboxylase from Bacillus cytotoxicus (strain DSM 22905 / CIP 110041 / 391-98 / NVH 391-98).